Consider the following 338-residue polypeptide: Solute carrier family 35 member G3 (338 aa).

The tract at residues 1–24 (MAGSHPYFNQPDSTHPSPPSAPPS) is disordered. 9 consecutive transmembrane segments (helical) span residues 37–57 (TSGL…VGPL), 67–87 (LPSL…ALLL), 105–125 (FFCA…VQVV), 160–180 (CGLL…LWTL), 185–205 (TGVY…ALSL), 221–241 (TVAF…LFVL), 250–270 (LLSW…FTCV), 281–301 (LVCA…YYML), and 305–325 (VAPS…IITA). Positions 49–174 (LPAGFVGPLS…CILGLIIIVG (126 aa)) constitute an EamA 1 domain. The region spanning 272 to 325 (YAVTKAHPALVCAVLHSEVVVALILQYYMLHETVAPSDIVAAGVVLGSIAIITA) is the EamA 2 domain.

It belongs to the SLC35G solute transporter family. Expressed in testis.

The protein resides in the membrane. The chain is Solute carrier family 35 member G3 (SLC35G3) from Homo sapiens (Human).